Here is a 145-residue protein sequence, read N- to C-terminus: U1 small nuclear ribonucleoprotein C (145 aa).

The segment at 4–36 adopts a Matrin-type zinc-finger fold; the sequence is YYCDYCDTYLTHDSPSVRKTHCTGRKHRDNVKF. Residues 67–91 form a disordered region; that stretch reads FAGGPGGAPPKPAGVSIPPPNMGAP. Pro residues predominate over residues 73–91; sequence GAPPKPAGVSIPPPNMGAP.

Belongs to the U1 small nuclear ribonucleoprotein C family. As to quaternary structure, U1 snRNP is composed of the 7 core Sm proteins B/B', D1, D2, D3, E, F and G that assemble in a heptameric protein ring on the Sm site of the small nuclear RNA to form the core snRNP, and at least 3 U1 snRNP-specific proteins U1-70K, U1-A and U1-C. U1-C interacts with U1 snRNA and the 5' splice-site region of the pre-mRNA.

It is found in the nucleus. Functionally, component of the spliceosomal U1 snRNP, which is essential for recognition of the pre-mRNA 5' splice-site and the subsequent assembly of the spliceosome. U1-C is directly involved in initial 5' splice-site recognition for both constitutive and regulated alternative splicing. The interaction with the 5' splice-site seems to precede base-pairing between the pre-mRNA and the U1 snRNA. Stimulates commitment or early (E) complex formation by stabilizing the base pairing of the 5' end of the U1 snRNA and the 5' splice-site region. Regulates alternative splicing of a distinct group of target genes. This chain is U1 small nuclear ribonucleoprotein C, found in Drosophila melanogaster (Fruit fly).